Reading from the N-terminus, the 211-residue chain is Thymidylate kinase (211 aa).

11–18 (GPDGAGKT) is a binding site for ATP.

The protein belongs to the thymidylate kinase family.

The enzyme catalyses dTMP + ATP = dTDP + ADP. In terms of biological role, phosphorylation of dTMP to form dTDP in both de novo and salvage pathways of dTTP synthesis. In Streptococcus pyogenes serotype M49 (strain NZ131), this protein is Thymidylate kinase.